The chain runs to 60 residues: DNA gyrase inhibitor YacG (60 aa).

4 residues coordinate Zn(2+): cysteine 15, cysteine 18, cysteine 30, and cysteine 34.

Belongs to the DNA gyrase inhibitor YacG family. Interacts with GyrB. Zn(2+) serves as cofactor.

In terms of biological role, inhibits all the catalytic activities of DNA gyrase by preventing its interaction with DNA. Acts by binding directly to the C-terminal domain of GyrB, which probably disrupts DNA binding by the gyrase. In Nitrobacter hamburgensis (strain DSM 10229 / NCIMB 13809 / X14), this protein is DNA gyrase inhibitor YacG.